Reading from the N-terminus, the 111-residue chain is Small ribosomal subunit protein uS15c (111 aa).

Belongs to the universal ribosomal protein uS15 family. Part of the 30S ribosomal subunit.

It is found in the plastid. Its subcellular location is the chloroplast. The protein is Small ribosomal subunit protein uS15c (rps15) of Staurastrum punctulatum (Green alga).